A 68-amino-acid chain; its full sequence is Beta-defensin 1 (68 aa).

Positions 1–21 (MRTSYLLLFTLCLLLSEMASG) are cleaved as a signal peptide. Positions 22–32 (DNFLTGLGHRS) are excised as a propeptide. Cystine bridges form between Cys-37/Cys-66, Cys-44/Cys-59, and Cys-49/Cys-67.

Belongs to the beta-defensin family. In terms of assembly, monomer. Homodimer.

The protein resides in the secreted. It localises to the membrane. Functionally, has bactericidal activity. May act as a ligand for C-C chemokine receptor CCR6. Positively regulates the sperm motility and bactericidal activity in a CCR6-dependent manner. Binds to CCR6 and triggers Ca2+ mobilization in the sperm which is important for its motility. The polypeptide is Beta-defensin 1 (DEFB1) (Allochrocebus preussi (Preuss's monkey)).